A 378-amino-acid chain; its full sequence is UPF0754 membrane protein BCAH187_A1042 (378 aa).

The next 2 membrane-spanning stretches (helical) occupy residues 1–21 and 357–377; these read MNIW…GGFT and YLGA…LLFL.

Belongs to the UPF0754 family.

It is found in the cell membrane. The sequence is that of UPF0754 membrane protein BCAH187_A1042 from Bacillus cereus (strain AH187).